We begin with the raw amino-acid sequence, 465 residues long: Asparagine--tRNA ligase (465 aa).

This sequence belongs to the class-II aminoacyl-tRNA synthetase family. As to quaternary structure, homodimer.

It is found in the cytoplasm. It carries out the reaction tRNA(Asn) + L-asparagine + ATP = L-asparaginyl-tRNA(Asn) + AMP + diphosphate + H(+). The polypeptide is Asparagine--tRNA ligase (Clostridium perfringens (strain ATCC 13124 / DSM 756 / JCM 1290 / NCIMB 6125 / NCTC 8237 / Type A)).